The following is a 136-amino-acid chain: Protein NrdI (136 aa).

It belongs to the NrdI family.

Functionally, probably involved in ribonucleotide reductase function. The polypeptide is Protein NrdI (Klebsiella pneumoniae subsp. pneumoniae (strain ATCC 700721 / MGH 78578)).